We begin with the raw amino-acid sequence, 881 residues long: EEF1AKMT4-ECE2 readthrough transcript protein (881 aa).

Positions 1 to 160 (MASPRTPVSP…VHTVDQVLSE (160 aa)) are methyltransferase-like region. Residues 1–178 (MASPRTPVSP…QLFGSHTQLE (178 aa)) are Cytoplasmic-facing. The S-adenosyl-L-methionine site is built by Trp26 and Tyr30. Tyr39 bears the Phosphotyrosine mark. S-adenosyl-L-methionine contacts are provided by residues Trp41, Gly66, 88-89 (DY), 113-114 (DV), and Lys130. Position 174 is a phosphoserine (His174). A helical; Signal-anchor for type II membrane protein membrane pass occupies residues 179-199 (LVLAGLILVLAALLLGCLVAL). The Lumenal portion of the chain corresponds to 200–881 (WVHRDPAHST…MNPGQLCEVW (682 aa)). The Peptidase M13 domain maps to 209–881 (TCVTEACIRV…MNPGQLCEVW (673 aa)). 5 disulfides stabilise this stretch: Cys210-Cys215, Cys233-Cys866, Cys241-Cys826, Cys297-Cys546, and Cys755-Cys878. 7 N-linked (GlcNAc...) asparagine glycosylation sites follow: Asn277, Asn281, Asn322, Asn382, Asn427, Asn494, and Asn650. Zn(2+) is bound at residue His718. Glu719 is an active-site residue. His722 provides a ligand contact to Zn(2+). Residues Asn743 and Asn751 are each glycosylated (N-linked (GlcNAc...) asparagine). Glu778 contributes to the Zn(2+) binding site. Asp782 (proton donor) is an active-site residue.

It in the N-terminal section; belongs to the methyltransferase superfamily. In the C-terminal section; belongs to the peptidase M13 family. Requires Zn(2+) as cofactor. As to expression, expressed at high levels in central nervous system. Expressed in adrenal glands, ovary and uterus, and at low levels in heart.

Its subcellular location is the golgi apparatus membrane. The protein localises to the cytoplasmic vesicle. It localises to the secretory vesicle membrane. It catalyses the reaction Hydrolysis of the 21-Trp-|-Val-22 bond in big endothelin to form endothelin 1.. With respect to regulation, inhibited by phosphoramidon. Functionally, converts big endothelin-1 to endothelin-1. May also have methyltransferase activity. May play a role in amyloid-beta processing. The protein is EEF1AKMT4-ECE2 readthrough transcript protein of Mus musculus (Mouse).